The chain runs to 367 residues: uncharacterized protein (367 aa).

Positions 1–96 constitute an FAD-binding PCMH-type domain; that stretch reads ITLHRLAELV…LTATLQLQPV (96 aa).

This sequence to M.tuberculosis Rv3790.

This is an uncharacterized protein from Streptomyces coelicolor.